The chain runs to 165 residues: Nucleotide-binding protein CFF8240_1664 (165 aa).

This sequence belongs to the YajQ family.

In terms of biological role, nucleotide-binding protein. This Campylobacter fetus subsp. fetus (strain 82-40) protein is Nucleotide-binding protein CFF8240_1664.